Consider the following 791-residue polypeptide: Cytochrome c oxidase polypeptide I+III (791 aa).

The interval 1–473 is COX1; sequence MAITAKPKAG…LLSTIGAYIL (473 aa). A helical membrane pass occupies residues 29-49; it reads LMYTATAFFAFALAGVFSLLI. H73 is a binding site for Fe(II)-heme a. 17 helical membrane passes run 78-98, 111-131, 155-175, 201-221, 244-264, 282-302, 312-332, 347-367, 381-401, 423-443, 464-484, 566-586, 617-637, 657-677, 691-711, 729-749, and 771-791; these read LFFFIIQAGLTGFGNFVVPLM, AFSYWAFLGAIVLALMSYFFP, FYLAAILLLGFSSLLGNANFV, ASVLNLFSLAGLTAATLLVLL, FFWFYSHPTVYVMLLPYLGIL, MVWAQMGIVVLGTMVWAHHMF, IAFAFFTALIAVPTGVKLFNI, LYWVLGFIFNFLLGGITGVML, FVVAHFHNVLMAGSGFGAFAG, FWLFLVGYLLTFLPQYALGYL, LLSTIGAYILGLGGLVWIYTM, FAFFVAVAALPVPNVWMWVFL, AWMGMAWFIVSEVGLFAILIA, LWLALLNTFLLVSSSFTVHFA, FGLLVTIILGVLFFLVQSWEF, FFTIVGLHGLHVVIGGFGLIL, and SMYWHLVDAVWLVIVTIFYVW. 4 residues coordinate Cu cation: H250, Y254, H299, and H300. Positions 250–254 form a cross-link, 1'-histidyl-3'-tyrosine (His-Tyr); that stretch reads HPTVY. H385 serves as a coordination point for heme a3. H387 lines the Fe(II)-heme a pocket. Positions 545-791 are COX3; that stretch reads DPAHIHLPNS…LVIVTIFYVW (247 aa).

In the N-terminal section; belongs to the heme-copper respiratory oxidase family. It in the C-terminal section; belongs to the cytochrome c oxidase subunit 3 family. In terms of assembly, possibly a heterodimer of A-protein (contains: cytochrome c oxidase subunits I and III) and subunit II. The A-protein could also present a precursor form of subunits I and III. Requires Cu(2+) as cofactor. Heme serves as cofactor.

It localises to the cell membrane. It catalyses the reaction 4 Fe(II)-[cytochrome c] + O2 + 8 H(+)(in) = 4 Fe(III)-[cytochrome c] + 2 H2O + 4 H(+)(out). It functions in the pathway energy metabolism; oxidative phosphorylation. Cytochrome c oxidase is the component of the respiratory chain that catalyzes the reduction of oxygen to water. Subunits 1-3 form the functional core of the enzyme complex. Co I is the catalytic subunit of the enzyme. Electrons originating in cytochrome c are transferred via the copper A center of subunit 2 and heme a of subunit 1 to the bimetallic center formed by heme a3 and copper B. This cytochrome c oxidase shows proton pump activity across the membrane in addition to the electron transfer. The chain is Cytochrome c oxidase polypeptide I+III (caaA) from Thermus thermophilus (strain ATCC 27634 / DSM 579 / HB8).